Consider the following 488-residue polypeptide: 3-octaprenyl-4-hydroxybenzoate carboxy-lyase (488 aa).

N172 contacts Mn(2+). Prenylated FMN-binding positions include 175–177 (IYR), 189–191 (RWL), and 194–195 (RG). E238 provides a ligand contact to Mn(2+). D287 functions as the Proton donor in the catalytic mechanism.

Belongs to the UbiD family. As to quaternary structure, homohexamer. Requires prenylated FMN as cofactor. Mn(2+) serves as cofactor.

The protein localises to the cell membrane. It carries out the reaction a 4-hydroxy-3-(all-trans-polyprenyl)benzoate + H(+) = a 2-(all-trans-polyprenyl)phenol + CO2. Its pathway is cofactor biosynthesis; ubiquinone biosynthesis. In terms of biological role, catalyzes the decarboxylation of 3-octaprenyl-4-hydroxy benzoate to 2-octaprenylphenol, an intermediate step in ubiquinone biosynthesis. This chain is 3-octaprenyl-4-hydroxybenzoate carboxy-lyase, found in Alteromonas mediterranea (strain DSM 17117 / CIP 110805 / LMG 28347 / Deep ecotype).